Reading from the N-terminus, the 1096-residue chain is Cohesin subunit scc-3 (1096 aa).

Residues 1–21 (MSETPTDQSPQRMSTRNQARV) show a composition bias toward polar residues. Disordered stretches follow at residues 1–53 (MSET…KKRA) and 67–106 (NLNN…ESAE). Residues 261–312 (IELTQSKEKTSKQIEAEKAKLKNNSAGNEKYEALVAQRTQTEERAEEIRQII) adopt a coiled-coil conformation. One can recognise an SCD domain in the interval 320–405 (FVHRYRDVVP…NKFKDRLVSM (86 aa)). Residues 1057–1096 (DNMSVRSGMTVTSNATMRSTASSTRGRGRGRGRSRIADDF) are disordered. Polar residues predominate over residues 1060-1073 (SVRSGMTVTSNATM).

The protein belongs to the SCC3 family. As to quaternary structure, component of the cohesin complex, composed of the smc-1 and smc-3 heterodimer attached via their hinge domain, scc-1 which links them, and scc-3. Interacts with scc-1, smc-1 and tim-1. Expressed in gonadal cells.

The protein localises to the nucleus. The protein resides in the chromosome. In terms of biological role, component of the cohesin complex, a complex required for the cohesion of sister chromatids after DNA replication. The cohesin complex apparently forms a large proteinaceous ring within which sister chromatids can be trapped. At anaphase, the scc-1 subunit of the complex is cleaved and dissociates from chromatin, allowing sister chromatids to segregate. The cohesin complex may also play a role in spindle pole assembly during mitosis. Plays an essential role in cell division during embryonic development. Required for the assembly of the synaptonemal complex between homologous chromosomes to promote sister chromatid cohesion during mitosis and meiosis. Has a role in stabilization of homologous chromosome associations during meiotic synapsis. Required for chromosome segregation during mitosis and meiosis. Plays a role in DNA double-strand break (DSB) repair during meiotic recombination and promotes the assembly of the 9-1-1 cell-cycle checkpoint response complex which is required for inducing apoptosis in response to DNA damage, at DNA damage sites. This is Cohesin subunit scc-3 from Caenorhabditis elegans.